The following is a 163-amino-acid chain: HTH-type transcriptional regulator IscR (163 aa).

The HTH rrf2-type domain maps to 2 to 131 (RLTSKGRYAV…NNITLGELVN (130 aa)). Positions 28–51 (LADISERQGISLSYLEQLFSRLRK) form a DNA-binding region, H-T-H motif. Residues cysteine 92, cysteine 98, and cysteine 104 each contribute to the [2Fe-2S] cluster site.

Requires [2Fe-2S] cluster as cofactor.

Its function is as follows. Regulates the transcription of several operons and genes involved in the biogenesis of Fe-S clusters and Fe-S-containing proteins. The sequence is that of HTH-type transcriptional regulator IscR from Klebsiella pneumoniae subsp. pneumoniae (strain ATCC 700721 / MGH 78578).